The primary structure comprises 560 residues: OTU domain-containing protein 5-A (560 aa).

Disordered stretches follow at residues 1-100 and 141-190; these read MTIL…MACV and GGGT…QSED. Positions 17-32 are enriched in basic and acidic residues; sequence DHPDDPDRRTGSDPHQ. Over residues 141-163 the composition is skewed to gly residues; that stretch reads GGGTGPGAAGGGGGGGGGGGVGG. In terms of domain architecture, OTU spans 211-334; the sequence is FVIKKMKEDG…NIHYNSVVNP (124 aa). The cys-loop stretch occupies residues 216 to 222; the sequence is MKEDGAC. Residue aspartate 219 is part of the active site. Residue cysteine 222 is the Nucleophile of the active site. Residues 271–281 form a variable-loop region; that stretch reads KRKNNCHGNHI. Positions 322–327 are his-loop; sequence YHRNIH. Histidine 327 is an active-site residue. Residues 411–496 form a disordered region; that stretch reads ARQPRKASAT…ACVGPDRPTS (86 aa). 2 stretches are compositionally biased toward low complexity: residues 417 to 430 and 437 to 448; these read ASAT…AASS and ARSPRQRSSAPS.

It belongs to the peptidase C85 family.

The enzyme catalyses Thiol-dependent hydrolysis of ester, thioester, amide, peptide and isopeptide bonds formed by the C-terminal Gly of ubiquitin (a 76-residue protein attached to proteins as an intracellular targeting signal).. Functionally, deubiquitinating enzyme that may function as negative regulator of the innate immune system. Has peptidase activity towards 'Lys-48'- and 'Lys-63'-linked polyubiquitin chains. Can also cleave 'Lys-11'-linked ubiquitin chains (in vitro). This is OTU domain-containing protein 5-A (otud5a) from Danio rerio (Zebrafish).